Consider the following 138-residue polypeptide: Membrane glycoprotein UL139 (138 aa).

A signal peptide spans Met1–Ser15. The interval Thr17–Thr37 is disordered. A helical membrane pass occupies residues Gly64–Val84. Polar residues predominate over residues Ser113–Gln129. The interval Ser113–Arg138 is disordered.

The protein resides in the host membrane. This Homo sapiens (Human) protein is Membrane glycoprotein UL139 (UL139).